An 877-amino-acid chain; its full sequence is MTTESMPESTNDYQPQSIEAAIQHVWDEQQVFVAKEDDSKEKFYCLSMFPYPSGKLHMGHVRNYTIGDVVSRFQRMQGKNVLQPMGWDAFGLPAENAAMDNQVAPAKWTYQNIDYMRNQLKRLGLGYDWTREVATCHPEYYRWEQWLFTRLMEKGLVYRKLSVVNWDPVDQTVLANEQVIDGKGWRSGVPVERKEIAQWFLRITDYAEELLTDLDQLEGWPEQVKTMQKNWIGKSTGLEIEFPIASGLDESNGSLKVYTTRPDTLMGVTYVAVAADHPWARKASVNNEPLERFIEECSHISTAEADMETMEKKGVDTGIRVKHPITGDEVPVWAANFVLMGYGTGAVMSVPAHDQRDYEFAKAYDLPIKAVIAPKAGEEADVSEAAFTEKGVLVNSGQFDGLKSKQALHEMAKVLGELGLGEKQTNYRLRDWGISRQRYWGCPIPVIYCPACGALPVPEKDLPVRLPEDVVPDGSGSPLAKLDSFKKCECPQCGGPANRETDTFDTFFESSWYHARYTSRHEDNAMLDKAAADHWLPVDQYIGGIEHAILHLLYARFFHKLMRDEGLVSSDEPFKNLLTQGMVLAGSWFTQDEKGKQTWYSPLDVDPVTDDKGAIVKGTLKSDGTEVQYGGIIKMSKSKNNGIDPQTLIDQYGADTLRLYIMFASPPEQTLEWSDSAVEGAHRFLNRVWRQVQTHVSTGVVAACTSNDDLTKEQKALRLKLHTTLQKVTDDMGRRMHFNTAIAATMELLNDISRFKDESDAGRSVMQEALEMLVLMLSPMTPHASQALWEALGHDGLVLNVTWPTVDDAALVKDEIEIMVQVNGKLRGKIEVAAEADKDTILAAAKANEQAAKFIDGKDIVKEIVVPGRLVNIVVKG.

Positions 50–60 (PYPSGKLHMGH) match the 'HIGH' region motif. A 'KMSKS' region motif is present at residues 634–638 (KMSKS). K637 lines the ATP pocket.

Belongs to the class-I aminoacyl-tRNA synthetase family.

It is found in the cytoplasm. The catalysed reaction is tRNA(Leu) + L-leucine + ATP = L-leucyl-tRNA(Leu) + AMP + diphosphate. This chain is Leucine--tRNA ligase, found in Hydrogenovibrio crunogenus (strain DSM 25203 / XCL-2) (Thiomicrospira crunogena).